The primary structure comprises 683 residues: MKAKKTVGSSGSCVRAPALSTEPMAAVKHLAQIPRCTETGMICTQGCVTIEDVTVYFSQEEWKLLDEAQRLLYLDVMLENFTLISSLVYRYEAEAEEKTCAQSLSQTEAPQVRTPKQGQLRQKPHPSDICITVLKDILHLNDLPGQKPYLTEVCTKPQDHKHHRAKNWLKRDVDSLVKSCIFHVAGNPFICSKIGEKFPAIWNLLQPKDIPNGEKQNKIKRGKAFHRDKNNSESDEYKKSSSPQHRLHEYPGVCSAKGGFESNSCEQDLNKYSPAPFRMDQTENRPYECHVCGKWFGQKATLRIHQRRHTGEKPYKCGECGKSFCQSSNLSEHCRVHSGERPFECLECGKAFGCHSSLLRHQRTHTGEWPYECSDCGRLFRQIVSLITHQRTHTTEKPYECGQCEKSFSHKATLTVHQRVHTGEKPYHCEACGKSFSQSANLIKHSKIHTGEKPYECGECGLCFRQRATLMKHQRTHTSERPYECRECGKFFKQYFYLIEHRRIHTTTEFYECEQCGKSYTQKATLIRHQRVHTGESPYKCEECGKAFEYKSRLKRHQRTHTGERPYECAKCGKFFRESYNLAEHQKIHTKAKPYHCDQCGKCFSRRADLVKHQRVHTGERPYTCGECGKTFSRTTNLVQHRRIHTGERPYECDQCGKSFSQVSTLTRHQLLHTGEKPYKCSK.

The KRAB domain occupies 48–123 (VTIEDVTVYF…TPKQGQLRQK (76 aa)). Over residues 102–120 (QSLSQTEAPQVRTPKQGQL) the composition is skewed to polar residues. 2 disordered regions span residues 102–124 (QSLSQTEAPQVRTPKQGQLRQKP) and 209–247 (DIPNGEKQNKIKRGKAFHRDKNNSESDEYKKSSSPQHRL). Residues 225–239 (FHRDKNNSESDEYKK) show a composition bias toward basic and acidic residues. 14 C2H2-type zinc fingers span residues 287–309 (YECHVCGKWFGQKATLRIHQRRH), 315–337 (YKCGECGKSFCQSSNLSEHCRVH), 343–365 (FECLECGKAFGCHSSLLRHQRTH), 371–393 (YECSDCGRLFRQIVSLITHQRTH), 399–421 (YECGQCEKSFSHKATLTVHQRVH), 427–449 (YHCEACGKSFSQSANLIKHSKIH), 455–477 (YECGECGLCFRQRATLMKHQRTH), 483–505 (YECRECGKFFKQYFYLIEHRRIH), 511–533 (YECEQCGKSYTQKATLIRHQRVH), 539–561 (YKCEECGKAFEYKSRLKRHQRTH), 567–589 (YECAKCGKFFRESYNLAEHQKIH), 595–617 (YHCDQCGKCFSRRADLVKHQRVH), 623–645 (YTCGECGKTFSRTTNLVQHRRIH), and 651–673 (YECDQCGKSFSQVSTLTRHQLLH).

The protein belongs to the krueppel C2H2-type zinc-finger protein family.

It localises to the nucleus. Functionally, transcriptional repressor. May play a role as regulator of the ubiquitin-proteasome system and autophagy-lysosomal pathway. This Rattus norvegicus (Rat) protein is Zinc finger protein 418.